The following is a 196-amino-acid chain: MISMDDIIREGYPTLREVANDVTLPLSDEDIILGEKMLQFLHNSQDPVMAEKMGLRGGVGLAANQLGLLKKVIAVLIPNEPEVDEDGNEIPPKEAYKMREIMYNAKVVSHSVQDAAVEGGEGCLSVDREVPGYVVRHARVTVEYYNKEGEKKKIRLKDFPAICVQHEIDHTNGVMFYDHINMNDPWEIKDGMIIVK.

Residues Cys-123 and His-166 each contribute to the Fe cation site. Glu-167 is a catalytic residue. His-170 is a binding site for Fe cation.

The protein belongs to the polypeptide deformylase family. Fe(2+) serves as cofactor.

The enzyme catalyses N-terminal N-formyl-L-methionyl-[peptide] + H2O = N-terminal L-methionyl-[peptide] + formate. Functionally, removes the formyl group from the N-terminal Met of newly synthesized proteins. Requires at least a dipeptide for an efficient rate of reaction. N-terminal L-methionine is a prerequisite for activity but the enzyme has broad specificity at other positions. The polypeptide is Peptide deformylase (Lactococcus lactis subsp. lactis (strain IL1403) (Streptococcus lactis)).